A 123-amino-acid polypeptide reads, in one-letter code: Large ribosomal subunit protein bL12 (123 aa).

Belongs to the bacterial ribosomal protein bL12 family. As to quaternary structure, homodimer. Part of the ribosomal stalk of the 50S ribosomal subunit. Forms a multimeric L10(L12)X complex, where L10 forms an elongated spine to which 2 to 4 L12 dimers bind in a sequential fashion. Binds GTP-bound translation factors.

Its function is as follows. Forms part of the ribosomal stalk which helps the ribosome interact with GTP-bound translation factors. Is thus essential for accurate translation. The polypeptide is Large ribosomal subunit protein bL12 (Pseudoalteromonas atlantica (strain T6c / ATCC BAA-1087)).